A 365-amino-acid polypeptide reads, in one-letter code: Chorismate synthase (365 aa).

NADP(+) contacts are provided by Arg48 and Arg54. FMN contacts are provided by residues 131–133, 243–244, Gly288, 303–307, and Arg329; these read RSS, NA, and KPTSS.

Belongs to the chorismate synthase family. Homotetramer. The cofactor is FMNH2.

It catalyses the reaction 5-O-(1-carboxyvinyl)-3-phosphoshikimate = chorismate + phosphate. The protein operates within metabolic intermediate biosynthesis; chorismate biosynthesis; chorismate from D-erythrose 4-phosphate and phosphoenolpyruvate: step 7/7. Its function is as follows. Catalyzes the anti-1,4-elimination of the C-3 phosphate and the C-6 proR hydrogen from 5-enolpyruvylshikimate-3-phosphate (EPSP) to yield chorismate, which is the branch point compound that serves as the starting substrate for the three terminal pathways of aromatic amino acid biosynthesis. This reaction introduces a second double bond into the aromatic ring system. In Rhizobium etli (strain ATCC 51251 / DSM 11541 / JCM 21823 / NBRC 15573 / CFN 42), this protein is Chorismate synthase.